Consider the following 139-residue polypeptide: MADMSLTIITPERTVLRDAPADAVVVPVVDGSMGILKNHAPMVANLRIGVLRYKQDGVYKRVAVTGGFVEVSENRITVLADAAELAESIDVMRAMEAKRRAEARLRDRKANIDRTRAEAALRRAMVRLRAAGALDHDKD.

This sequence belongs to the ATPase epsilon chain family. In terms of assembly, F-type ATPases have 2 components, CF(1) - the catalytic core - and CF(0) - the membrane proton channel. CF(1) has five subunits: alpha(3), beta(3), gamma(1), delta(1), epsilon(1). CF(0) has three main subunits: a, b and c.

It is found in the cell membrane. Its function is as follows. Produces ATP from ADP in the presence of a proton gradient across the membrane. The chain is ATP synthase epsilon chain from Symbiobacterium thermophilum (strain DSM 24528 / JCM 14929 / IAM 14863 / T).